Here is a 193-residue protein sequence, read N- to C-terminus: Acyl carrier protein phosphodiesterase (193 aa).

This sequence belongs to the AcpH family.

The enzyme catalyses holo-[ACP] + H2O = apo-[ACP] + (R)-4'-phosphopantetheine + H(+). Functionally, converts holo-ACP to apo-ACP by hydrolytic cleavage of the phosphopantetheine prosthetic group from ACP. In Escherichia coli O127:H6 (strain E2348/69 / EPEC), this protein is Acyl carrier protein phosphodiesterase.